The chain runs to 106 residues: Nucleoid-associated protein BBta_7345 (106 aa).

The protein belongs to the YbaB/EbfC family. As to quaternary structure, homodimer.

Its subcellular location is the cytoplasm. It is found in the nucleoid. Binds to DNA and alters its conformation. May be involved in regulation of gene expression, nucleoid organization and DNA protection. The polypeptide is Nucleoid-associated protein BBta_7345 (Bradyrhizobium sp. (strain BTAi1 / ATCC BAA-1182)).